The chain runs to 380 residues: Phospho-N-acetylmuramoyl-pentapeptide-transferase (380 aa).

Helical transmembrane passes span isoleucine 26 to glutamate 46, methionine 75 to glycine 95, leucine 98 to tryptophan 118, leucine 135 to proline 155, glycine 160 to proline 180, leucine 183 to threonine 203, isoleucine 222 to phenylalanine 242, leucine 259 to tyrosine 279, valine 283 to leucine 303, alanine 311 to phenylalanine 331, and lysine 357 to leucine 377.

It belongs to the glycosyltransferase 4 family. MraY subfamily. The cofactor is Mg(2+).

Its subcellular location is the cell inner membrane. The catalysed reaction is UDP-N-acetyl-alpha-D-muramoyl-L-alanyl-gamma-D-glutamyl-meso-2,6-diaminopimeloyl-D-alanyl-D-alanine + di-trans,octa-cis-undecaprenyl phosphate = di-trans,octa-cis-undecaprenyl diphospho-N-acetyl-alpha-D-muramoyl-L-alanyl-D-glutamyl-meso-2,6-diaminopimeloyl-D-alanyl-D-alanine + UMP. It functions in the pathway cell wall biogenesis; peptidoglycan biosynthesis. Catalyzes the initial step of the lipid cycle reactions in the biosynthesis of the cell wall peptidoglycan: transfers peptidoglycan precursor phospho-MurNAc-pentapeptide from UDP-MurNAc-pentapeptide onto the lipid carrier undecaprenyl phosphate, yielding undecaprenyl-pyrophosphoryl-MurNAc-pentapeptide, known as lipid I. In Anaeromyxobacter sp. (strain Fw109-5), this protein is Phospho-N-acetylmuramoyl-pentapeptide-transferase.